Reading from the N-terminus, the 101-residue chain is Large ribosomal subunit protein uL24 (101 aa).

It belongs to the universal ribosomal protein uL24 family. In terms of assembly, part of the 50S ribosomal subunit.

Its function is as follows. One of two assembly initiator proteins, it binds directly to the 5'-end of the 23S rRNA, where it nucleates assembly of the 50S subunit. In terms of biological role, one of the proteins that surrounds the polypeptide exit tunnel on the outside of the subunit. The protein is Large ribosomal subunit protein uL24 of Dinoroseobacter shibae (strain DSM 16493 / NCIMB 14021 / DFL 12).